The sequence spans 118 residues: Mu-like prophage FluMu tail tube protein (118 aa).

Residues 12–32 form a disordered region; it reads RLNGKEWPSDNDGTLTPGGKE.

The protein to phage Mu protein M.

This is Mu-like prophage FluMu tail tube protein from Haemophilus influenzae (strain ATCC 51907 / DSM 11121 / KW20 / Rd).